The chain runs to 331 residues: Phosphate acyltransferase (331 aa).

This sequence belongs to the PlsX family. As to quaternary structure, homodimer. Probably interacts with PlsY.

It localises to the cytoplasm. The enzyme catalyses a fatty acyl-[ACP] + phosphate = an acyl phosphate + holo-[ACP]. The protein operates within lipid metabolism; phospholipid metabolism. In terms of biological role, catalyzes the reversible formation of acyl-phosphate (acyl-PO(4)) from acyl-[acyl-carrier-protein] (acyl-ACP). This enzyme utilizes acyl-ACP as fatty acyl donor, but not acyl-CoA. This chain is Phosphate acyltransferase, found in Exiguobacterium sibiricum (strain DSM 17290 / CCUG 55495 / CIP 109462 / JCM 13490 / 255-15).